We begin with the raw amino-acid sequence, 196 residues long: Protein TEX261 (196 aa).

5 helical membrane passes run 3-23 (FMYVLSWLSLFIQVAFITLAV), 42-62 (SRIIKYMIWFSTAVLIGLYVF), 70-90 (IGVGLFTNLVYFGLLQTFPFI), 97-117 (FILSCGLVVVNHYLAFQFFAE), and 125-145 (VLAYFTFCLWIIPFAFFVSLS).

Belongs to the SVP26 family. Detected in testis.

The protein resides in the membrane. This is Protein TEX261 (Tex261) from Mus musculus (Mouse).